The following is a 56-amino-acid chain: Male-specific sperm protein Mst87F (56 aa).

Belongs to the MST(3)CGP family. In terms of tissue distribution, testis.

This Drosophila melanogaster (Fruit fly) protein is Male-specific sperm protein Mst87F (Mst87F).